A 197-amino-acid polypeptide reads, in one-letter code: FMN-dependent NADH:quinone oxidoreductase 1 (197 aa).

FMN contacts are provided by residues Ser-10, 16-18, 93-96, and 137-140; these read SQS, MYNF, and TRGG.

Belongs to the azoreductase type 1 family. In terms of assembly, homodimer. FMN is required as a cofactor.

The catalysed reaction is 2 a quinone + NADH + H(+) = 2 a 1,4-benzosemiquinone + NAD(+). It catalyses the reaction N,N-dimethyl-1,4-phenylenediamine + anthranilate + 2 NAD(+) = 2-(4-dimethylaminophenyl)diazenylbenzoate + 2 NADH + 2 H(+). Quinone reductase that provides resistance to thiol-specific stress caused by electrophilic quinones. In terms of biological role, also exhibits azoreductase activity. Catalyzes the reductive cleavage of the azo bond in aromatic azo compounds to the corresponding amines. The polypeptide is FMN-dependent NADH:quinone oxidoreductase 1 (Photobacterium profundum (strain SS9)).